The sequence spans 264 residues: Versicolorin reductase stcU (264 aa).

Ile-23, Asp-69, Asn-96, and Arg-129 together coordinate NADP(+). Active-site proton donor residues include Ser-145 and Ser-146. NADP(+) is bound by residues Tyr-160, Lys-164, Ile-193, and Thr-195. Tyr-160 (proton acceptor) is an active-site residue. The active-site Lowers pKa of active site Tyr is the Lys-164.

Belongs to the short-chain dehydrogenases/reductases (SDR) family.

It carries out the reaction (4S,8R)-2,13,16,20-tetrahydroxy-7,9-dioxapentacyclo[10.8.0.0(3,10).0(4,8).0(14,19)]icosa-1(12),2,5,10,13,16,19-heptaen-18-one + NADPH + H(+) = (4S,8R,16R)-2,13,16,20-tetrahydroxy-7,9-dioxapentacyclo[10.8.0.0(3,10).0(4,8).0(14,19)]icosa-1(12),2,5,10,13,19-hexaen-18-one + NADP(+). The protein operates within mycotoxin biosynthesis; sterigmatocystin biosynthesis. In terms of biological role, versicolorin reductase; part of the gene cluster that mediates the biosynthesis of sterigmatocystin (ST), a polyketide-derived furanocoumarin which is part of the most toxic and carcinogenic compounds among the known mycotoxins. The first step in the biosynthesis of sterigmatocystin is the production of hexanoate by the fatty acid synthase (FAS) units stcJ and stcK. The polyketide backbone is assembled by the non-reducing polyketide synthase stcA by condensation of the starter hexanoyl-CoA and 7 malonyl-CoA extender units followed by cyclization and release of norsolorinic acid. Norsolorinic acid is the first stable intermediate in the biosynthesis of sterigmatocystin and is converted into averantin (AVN) by the ketoreductase stcE which reduces the hexanoate ketone to an alcohol. Averantin is then oxidized into 5'-hydroxyaverantin (HAVN) by the cytochrome P450 monooxygenase stcF. 5'-hydroxyaverantin is further converted to 5'-oxyaverantin (OAVN) by the 5'-hydroxyaverantin dehydrogenase stcG. The next step is the conversion of OAVN into averufin (AVF) which is catalyzed by a yet to be identified enzyme. The cytochrome P450 monooxygenase stcB and the flavin-binding monooxygenase stcW are both required for the conversion of averufin to 1-hydroxyversicolorone. The esterase stcI probably catalyzes the formation of versiconal hemiacetal acetate from 1-hydroxyversicolorone. The oxydoreductase stcN then probably catalyzes the biosynthetic step from versiconal to versicolorin B (VERB). The next step is performed by the versicolorin B desaturase stcL to produce versicolorin A (VERA). The ketoreductase stcU and the cytochrome P450 monooxygenase stcS are involved in the conversion of versicolorin A to demethylsterigmatocystin. The Baeyer-Villiger oxidas stcQ and the reductase stcR might be involved in the biosynthetic step from versicolorin A to demethylsterigmatocystin. The final step in the biosynthesis of sterigmatocystin is the methylation of demethylsterigmatocystin catalyzed by the methyltransferase stcP. This chain is Versicolorin reductase stcU, found in Emericella nidulans (strain FGSC A4 / ATCC 38163 / CBS 112.46 / NRRL 194 / M139) (Aspergillus nidulans).